Consider the following 975-residue polypeptide: Glycine dehydrogenase (decarboxylating) (975 aa).

An N6-(pyridoxal phosphate)lysine modification is found at lysine 723.

The protein belongs to the GcvP family. As to quaternary structure, the glycine cleavage system is composed of four proteins: P, T, L and H. Pyridoxal 5'-phosphate is required as a cofactor.

The enzyme catalyses N(6)-[(R)-lipoyl]-L-lysyl-[glycine-cleavage complex H protein] + glycine + H(+) = N(6)-[(R)-S(8)-aminomethyldihydrolipoyl]-L-lysyl-[glycine-cleavage complex H protein] + CO2. In terms of biological role, the glycine cleavage system catalyzes the degradation of glycine. The P protein binds the alpha-amino group of glycine through its pyridoxal phosphate cofactor; CO(2) is released and the remaining methylamine moiety is then transferred to the lipoamide cofactor of the H protein. This Burkholderia lata (strain ATCC 17760 / DSM 23089 / LMG 22485 / NCIMB 9086 / R18194 / 383) protein is Glycine dehydrogenase (decarboxylating).